The following is a 764-amino-acid chain: MTITHNLGFPRIGAQRELKRAVEAYWSGKKTAADLEETGRELRAAHWQRQAASGLQWVPVGDFAWYDHILEWTTLLGAVPARFGQPEGQPVSLDTLFRMGRGRAPSGTPTAACEMTKWFDTNYHYIVPELVPGQTFRIAREYLFEQVQEAQALGHQVKPVIPGPLTWLWQGKGDAYAGGASDAAKLQLLDTLLPVYAEVLARLARLGVEWVQIDEPILVLDLPQAWRDAFRTAYARLADAPVKLLVATYFGGLNDNLATALALPVAGLHVDLIRAPGQLQDVAAGLRPGQVLSAGIIDGRNIWRTDLDAALAALAPARQLLGERLWLAPSCSLLHVPVDLANETDLDAELRSWLSFAAQKLDELGLLGRALADARAPGVDEALAAQRAALRARRQSARIHNPAVGRRMAESNAVTRERAPFAERIARQQQLLKLPAFPTTTIGSFPQTAEIRALRRDWKSGALSDSAYEAAIRKEIESVIRFQEKIGLDVLVHGEPERNDMVEYFGELLAGFAFTRNGWVQSYGSRCVKPPIIFGDVARPAPMTVGWSSYAQSLTDKPVKGMLTGPVTILQWSFVRDDQPREQTCRQLALALRDEVVDLEQAGVRVIQIDEPAIREGLPLRRADWQAYLDWAVDCFRLSTAGVAADTQIHTHMCYSEFNDIIESIAAMDADVITIETSRSNMELLKAFEDFRYPNDIGPGVYDIHSPNVPDVDWMVGLMRKAAGRLPSERLWVNPDCGLKTRAWPETEAALVGMVEAARALRAG.

5-methyltetrahydropteroyltri-L-glutamate-binding positions include Arg-16–Lys-19 and Lys-117. Residues Ile-442–Ser-444 and Glu-495 each bind L-homocysteine. L-methionine-binding positions include Ile-442 to Ser-444 and Glu-495. 5-methyltetrahydropteroyltri-L-glutamate-binding positions include Arg-526–Cys-527 and Trp-572. Position 610 (Asp-610) interacts with L-homocysteine. Asp-610 is a binding site for L-methionine. Glu-616 provides a ligand contact to 5-methyltetrahydropteroyltri-L-glutamate. Zn(2+)-binding residues include His-652, Cys-654, and Glu-676. Catalysis depends on His-705, which acts as the Proton donor. Cys-737 is a binding site for Zn(2+).

The protein belongs to the vitamin-B12 independent methionine synthase family. The cofactor is Zn(2+).

It catalyses the reaction 5-methyltetrahydropteroyltri-L-glutamate + L-homocysteine = tetrahydropteroyltri-L-glutamate + L-methionine. The protein operates within amino-acid biosynthesis; L-methionine biosynthesis via de novo pathway; L-methionine from L-homocysteine (MetE route): step 1/1. Functionally, catalyzes the transfer of a methyl group from 5-methyltetrahydrofolate to homocysteine resulting in methionine formation. In Bordetella petrii (strain ATCC BAA-461 / DSM 12804 / CCUG 43448), this protein is 5-methyltetrahydropteroyltriglutamate--homocysteine methyltransferase.